The sequence spans 176 residues: Oligoribonuclease (176 aa).

Residues 2–159 (EMTGLNPETD…DDILESIEEM (158 aa)) enclose the Exonuclease domain. Tyr-117 is a catalytic residue.

The protein belongs to the oligoribonuclease family.

It is found in the cytoplasm. In terms of biological role, 3'-to-5' exoribonuclease specific for small oligoribonucleotides. This chain is Oligoribonuclease, found in Neisseria gonorrhoeae (strain ATCC 700825 / FA 1090).